Reading from the N-terminus, the 269-residue chain is tRNA pseudouridine synthase A (269 aa).

D55 acts as the Nucleophile in catalysis. Y111 contacts substrate.

This sequence belongs to the tRNA pseudouridine synthase TruA family.

The enzyme catalyses uridine(38/39/40) in tRNA = pseudouridine(38/39/40) in tRNA. Its function is as follows. Formation of pseudouridine at positions 38, 39 and 40 in the anticodon stem and loop of transfer RNAs. The sequence is that of tRNA pseudouridine synthase A from Methanosarcina barkeri (strain Fusaro / DSM 804).